Consider the following 222-residue polypeptide: Octanoyltransferase (222 aa).

The region spanning 35–214 is the BPL/LPL catalytic domain; it reads GTAPELIWLL…HLDGFLARLD (180 aa). Substrate-binding positions include 73 to 80, 145 to 147, and 158 to 160; these read RGGRYTYH, AIG, and GFS. Residue Cys176 is the Acyl-thioester intermediate of the active site.

Belongs to the LipB family.

Its subcellular location is the cytoplasm. It carries out the reaction octanoyl-[ACP] + L-lysyl-[protein] = N(6)-octanoyl-L-lysyl-[protein] + holo-[ACP] + H(+). It participates in protein modification; protein lipoylation via endogenous pathway; protein N(6)-(lipoyl)lysine from octanoyl-[acyl-carrier-protein]: step 1/2. Functionally, catalyzes the transfer of endogenously produced octanoic acid from octanoyl-acyl-carrier-protein onto the lipoyl domains of lipoate-dependent enzymes. Lipoyl-ACP can also act as a substrate although octanoyl-ACP is likely to be the physiological substrate. The protein is Octanoyltransferase of Novosphingobium aromaticivorans (strain ATCC 700278 / DSM 12444 / CCUG 56034 / CIP 105152 / NBRC 16084 / F199).